The chain runs to 355 residues: 5-formaminoimidazole-4-carboxamide-1-(beta)-D-ribofuranosyl 5'-monophosphate synthetase (355 aa).

Residues His27 and Ser94 each contribute to the 5-amino-1-(5-phospho-beta-D-ribosyl)imidazole-4-carboxamide site. Positions 101–332 (TESFAELAVP…YSDMIEENLS (232 aa)) constitute an ATP-grasp domain. ATP-binding positions include 144–195 (PEKI…TRYY) and Glu225. Asn254 is a binding site for 5-amino-1-(5-phospho-beta-D-ribosyl)imidazole-4-carboxamide. Residues Glu292 and Glu305 each contribute to the Mg(2+) site.

It belongs to the phosphohexose mutase family. Requires Mg(2+) as cofactor. The cofactor is Mn(2+).

The catalysed reaction is 5-amino-1-(5-phospho-beta-D-ribosyl)imidazole-4-carboxamide + formate + ATP = 5-formamido-1-(5-phospho-D-ribosyl)imidazole-4-carboxamide + ADP + phosphate. It participates in purine metabolism; IMP biosynthesis via de novo pathway; 5-formamido-1-(5-phospho-D-ribosyl)imidazole-4-carboxamide from 5-amino-1-(5-phospho-D-ribosyl)imidazole-4-carboxamide (formate route): step 1/1. Catalyzes the ATP- and formate-dependent formylation of 5-aminoimidazole-4-carboxamide-1-beta-d-ribofuranosyl 5'-monophosphate (AICAR) to 5-formaminoimidazole-4-carboxamide-1-beta-d-ribofuranosyl 5'-monophosphate (FAICAR) in the absence of folates. The polypeptide is 5-formaminoimidazole-4-carboxamide-1-(beta)-D-ribofuranosyl 5'-monophosphate synthetase (Methanococcoides burtonii (strain DSM 6242 / NBRC 107633 / OCM 468 / ACE-M)).